A 296-amino-acid chain; its full sequence is Origin of replication complex subunit 6 (296 aa).

The disordered stretch occupies residues 212 to 296 (PSKRKHDDDS…MALEVSSAAN (85 aa)). A compositionally biased stretch (acidic residues) spans 220–236 (DSDSSGESSGDDQDELD). Over residues 254–264 (WKSSVLSSNKQ) the composition is skewed to polar residues.

It belongs to the ORC6 family. In terms of assembly, component of the origin recognition complex (ORC) composed of at least ORC1, ORC2, ORC3, ORC4, ORC5 and ORC6. ORC is regulated in a cell-cycle and development dependent manner. It is sequentially assembled at the exit from anaphase of mitosis and disassembled as cells enter S phase.

The protein resides in the nucleus. In terms of biological role, component of the origin recognition complex (ORC) that binds origins of replication. DNA-binding is ATP-dependent. The specific DNA sequences that define origins of replication have not been identified yet. ORC is required to assemble the pre-replication complex necessary to initiate DNA replication. This is Origin of replication complex subunit 6 from Oryza sativa subsp. indica (Rice).